Consider the following 706-residue polypeptide: MSSDASQGVITTPPPPSMPHKERYFDRINENDPEYIRERNMSPDLRQDFNMMEQRKRVTQILQSPAFREDLECLIQEQMKKGHNPTGLLALQQIADYIMANSFSGFSSPPLSLGMVTPINDLPGADTSSYVKGEKLTRCKLASLYRLVDLFGWAHLANTYISVRISKEQDHIIIIPRGLSFSEATASNLVKVNIIGEVVDQGSTNLKIDHTGFSPHAAIYSTRPDVKCVIHIHTLATAAVSSMKCGILPISQESLLLGDVAYYDYQGSLEEQEERIQLQKVLGPSCKVLVLRNHGVVALGETLEEAFHYIFNVQLACEIQVQALAGAGGVDNLHVLDFQKYKAFTYTVAASGGGGVNMGSHQKWKVGEIEFEGLMRTLDNLGYRTGYAYRHPLIREKPRHKSDVEIPATVTAFSFEDDTVPLSPLKYMAQRQQREKTRWLNSPNTYMKVNVPEESRNGETSPRTKITWMKAEDSSKVSGGTPIKIEDPNQFVPLNTNPNEVLEKRNKIREQNRYDLKTAGPQSQLLAGIVVDKPPSTMQFEDDDHGPPAPPNPFSHLTEGELEEYKRTIERKQQGLEDAEQELLSDDASSVSQIQSQTQSPQNVPEKLEENHELFSKSFISMEVPVMVVNGKDDMHDVEDELAKRVSRLSTSTTIENIEITIKSPEKIEEVLSPEGSPSKSPSKKKKKFRTPSFLKKNKKKEKVEA.

The span at methionine 1–isoleucine 10 shows a compositional bias: polar residues. The disordered stretch occupies residues methionine 1–histidine 20. Serine 2 carries the N-acetylserine modification. Phosphoserine is present on residues serine 42, serine 64, serine 402, serine 414, serine 423, serine 442, and serine 461. Disordered stretches follow at residues alanine 471–asparagine 497, proline 535–serine 555, glycine 575–glutamate 610, and glutamate 666–alanine 706. Lysine 484 participates in a covalent cross-link: Glycyl lysine isopeptide (Lys-Gly) (interchain with G-Cter in SUMO2). Serine 585, serine 590, serine 673, serine 677, serine 679, serine 681, and serine 683 each carry phosphoserine. A compositionally biased stretch (low complexity) spans serine 589–glutamine 602. A compositionally biased stretch (basic residues) spans proline 682 to alanine 706. The interaction with calmodulin stretch occupies residues lysine 684–lysine 701.

The protein belongs to the aldolase class II family. Adducin subfamily. In terms of assembly, heterodimer of an alpha and a gamma subunit. Post-translationally, sumoylated. In terms of processing, proteolytically cleaved by asparagine endopeptidase (AEP) into 2 fragments. Overexpression of the 1-357 fragment induces neuronal apoptosis, and overexpression of either 1-357 or 358-706 fragment increases the degeneration of dendritic spines. Overexpression of the 1-357 fragment impairs neurite outgrowth by downregulating the expression of Rac2, and induces synaptic dysfunction and cognitive impairments in tau P301S transgenic mice, a mouse model for Alzheimer disease (AD). As to expression, ubiquitously expressed. Cleavage fragment 1-357 is abundantly expressed in the brain of patients with Alzheimer disease (AD), but hardly detectable in age-matched control individuals (at protein level).

It localises to the cytoplasm. The protein resides in the cytoskeleton. Its subcellular location is the cell membrane. Membrane-cytoskeleton-associated protein that promotes the assembly of the spectrin-actin network. Plays a role in actin filament capping. Binds to calmodulin. Involved in myogenic reactivity of the renal afferent arteriole (Af-art), renal interlobular arteries and middle cerebral artery (MCA) to increased perfusion pressure. Involved in regulation of potassium channels in the vascular smooth muscle cells (VSMCs) of the Af-art and MCA ex vivo. Involved in regulation of glomerular capillary pressure, glomerular filtration rate (GFR) and glomerular nephrin expression in response to hypertension. Involved in renal blood flow (RBF) autoregulation. Plays a role in podocyte structure and function. Regulates globular monomer actin (G-actin) and filamentous polymer actin (F-actin) ratios in the primary podocytes affecting actin cytoskeleton organization. Regulates expression of synaptopodin, RhoA, Rac1 and CDC42 in the renal cortex and the primary podocytes. Regulates expression of nephrin in the glomeruli and in the primary podocytes, expression of nephrin and podocinin in the renal cortex, and expression of focal adhesion proteins integrin alpha-3 and integrin beta-1 in the glomeruli. Involved in cell migration and cell adhesion of podocytes, and in podocyte foot process effacement. Regulates expression of profibrotics markers MMP2, MMP9, TGF beta-1, tubular tight junction protein E-cadherin, and mesenchymal markers vimentin and alpha-SMA. Promotes the growth of neurites. The sequence is that of Gamma-adducin (ADD3) from Homo sapiens (Human).